The primary structure comprises 784 residues: Receptor-like protein 38 (784 aa).

An N-terminal signal peptide occupies residues 1–30; the sequence is MIRSQSYCFLGITITIYFFFCLLPLPNTFA. The Extracellular portion of the chain corresponds to 31 to 752; that stretch reads SPPTQSLCRH…SELEEPVLNW (722 aa). LRR repeat units follow at residues 109–133, 134–157, 158–180, 182–204, and 205–227; these read LQHL…IENL, SHLT…IGNL, NQLE…SFAN, TKLS…LSNL, and TSLA…DLSG. N132 is a glycosylation site (N-linked (GlcNAc...) asparagine). N-linked (GlcNAc...) asparagine glycans are attached at residues N180, N193, and N203. Residues 228–251 form an LRR 6; degenerate repeat; it reads LHNLEQIFGNENSFVGLFPASLLK. 10 LRR repeats span residues 252–276, 278–301, 302–324, 326–349, 351–373, 374–400, 402–422, 423–446, 447–470, and 472–496; these read ISSL…NTSS, SRLT…LSKL, VNLE…SISK, VNLT…IWKP, NLQS…EVVN, GAKL…NFRF, FFLD…LKNS, TDFN…CMDS, TMLR…LMNC, and DMEF…SRKS. N-linked (GlcNAc...) asparagine glycosylation is present at N273. A glycan (N-linked (GlcNAc...) asparagine) is linked at N327. 2 N-linked (GlcNAc...) asparagine glycosylation sites follow: N421 and N432. Residues 497–518 form an LRR 17; degenerate repeat; that stretch reads LMVLVLRSNAFYGPVYNSTTYL. N-linked (GlcNAc...) asparagine glycans are attached at residues N513, N544, and N562. The LRR 18 repeat unit spans residues 520–544; that stretch reads FPRLSIIDISNNDFVGSLPQDYFAN. LRR repeat units lie at residues 608–632, 633–656, 657–680, and 682–705; these read FRGF…IGLL, SELL…LANI, TNLE…LGNL, and FLSN…QFGT. N639, N655, N668, N679, N687, and N707 each carry an N-linked (GlcNAc...) asparagine glycan. Residues 753 to 773 form a helical membrane-spanning segment; sequence IAAAIAFGPGVFCGFVIGHIF. The Cytoplasmic segment spans residues 774–784; it reads TSYKHLWFIAR.

Belongs to the RLP family.

Its subcellular location is the cell membrane. In Arabidopsis thaliana (Mouse-ear cress), this protein is Receptor-like protein 38.